A 691-amino-acid polypeptide reads, in one-letter code: Elongation factor G (691 aa).

Positions 8–283 (EDYRNIGIMA…AVVDFLPSPL (276 aa)) constitute a tr-type G domain. Residues 17–24 (AHIDAGKT), 81–85 (DTPGH), and 135–138 (NKMD) each bind GTP.

The protein belongs to the TRAFAC class translation factor GTPase superfamily. Classic translation factor GTPase family. EF-G/EF-2 subfamily.

It is found in the cytoplasm. Functionally, catalyzes the GTP-dependent ribosomal translocation step during translation elongation. During this step, the ribosome changes from the pre-translocational (PRE) to the post-translocational (POST) state as the newly formed A-site-bound peptidyl-tRNA and P-site-bound deacylated tRNA move to the P and E sites, respectively. Catalyzes the coordinated movement of the two tRNA molecules, the mRNA and conformational changes in the ribosome. The chain is Elongation factor G from Parvibaculum lavamentivorans (strain DS-1 / DSM 13023 / NCIMB 13966).